Here is a 233-residue protein sequence, read N- to C-terminus: ATP-dependent Clp protease proteolytic subunit 1 (233 aa).

The active-site Nucleophile is the Ser-116. His-141 is an active-site residue.

This sequence belongs to the peptidase S14 family. In terms of assembly, fourteen ClpP subunits assemble into 2 heptameric rings which stack back to back to give a disk-like structure with a central cavity, resembling the structure of eukaryotic proteasomes.

Its subcellular location is the cytoplasm. It carries out the reaction Hydrolysis of proteins to small peptides in the presence of ATP and magnesium. alpha-casein is the usual test substrate. In the absence of ATP, only oligopeptides shorter than five residues are hydrolyzed (such as succinyl-Leu-Tyr-|-NHMec, and Leu-Tyr-Leu-|-Tyr-Trp, in which cleavage of the -Tyr-|-Leu- and -Tyr-|-Trp bonds also occurs).. Cleaves peptides in various proteins in a process that requires ATP hydrolysis. Has a chymotrypsin-like activity. Plays a major role in the degradation of misfolded proteins. The chain is ATP-dependent Clp protease proteolytic subunit 1 from Salinibacter ruber (strain DSM 13855 / M31).